Consider the following 2395-residue polypeptide: MKRKVMNGKLRLSPNEEAFILKEDYERRRKLRLLQVREQERGIAFQIREDIKQRRNQQVSHLAEELRAEWEEAQSQKIQNLEKLYLASLRHMGDGHQQAKENEPDLDALSRRAAERKTKAEARHKEALKAQKKQKEMLMKQKTRHIKARKEAVLVEKERSAKMARLPPPVPSPFENIDINRIPSLKTNRSTYHHISAFVSRQMGTKQPDAHLAAEEEARRVERLRKQAAQERMEQSERAHARGSQAMKKIHLAQNQERLMEELKQLQREDLACKRQTAAQMPSQLLELPYRRSEMKEDWQRELEFAFEDVYSADRKVKGNLILHLKPEPLPTMSDQLQDEELDLSMEQENEVPLATKTQQIPSRILLKRLLNKIRNQKSLWTIKSFSEDDNQVTASIISEIERKVPSTDSGTITTGETAVSFEQEQVMGSDRLMIESGPPSSEDKPLCYKSVTGKEQAMGVSPPATTVAQSSVLLHPQEEAARLRMSARHKQIMEIEEQKQKQLELLEQIEQQKLRLETDCFQAQLEETRKQADHLEVRPAPVSHAMISDEERHRQMIRNYQYQLLQQNRLHKQTVETARKRLLEYQTVLKERCPSMSARSLIPDSVVSEPPQQAQKPAVASDYWDPSQRPKLSPSKYQPVQPSQIPALDQNHIQVPRQGHIPQRQGETARAKQSVESQERQWQFSQVETQQRDYEFIFKDSHSLSRTSSYVRPQTLQAAGEVSKPLRAIICQTSDSQQISSEDSENISSKPTEPSSSLPLMPECSSSSLSVKLESETIQKAFTTVNRSVISQMHGQPLSSSETGTTQQGDIRFLQGQLELQKKVLQERQEAQEKLLSCTQKELEEQTGIPVFFPSPVGNMFSSLPSASAESGNIQTSSTKSDATVSSDSMDNPYSQPISLRQTNLEFLQEQFSVEKDNLQARREAQEVSFTHTQSKLDKIVRSEQTGSSWPQLVALESFSSLTSADTQSRKIQKPPLPTNKKGLLPSQSEILSSQDGSSGFLQQTLPLQNTLKLLQEQLTIQRGMIQPRLNAQETLLLHKERCSVDSKAGPVNSLSSAVAQHSEAGPQSLQELYSSKKENTVLSSHLITPEVQEESHGSPQHSLPRQEHFASLQEQAHIQRVILGARKQIQEFAHKQNEFKKGLYSQQTGALSSPSQGTGWEISQESLSVRSDSTDPLSHFKIPGFQERLVRALQPTFPLRDNLQEHQEWVDPEKESFQFSPQTQENRSSQQTGFSSFTPSLRQPSCVSLPSVDSGITQHPLSTERDSKVTSSHLQIPELQHRLLKISQLIQPQQDSLKALQEQLATSRTIIHSRQEALEETLREWKEKIFPEQVGPFSPLMTQHSFASFPVSDIERAQELCSTNSEGAISSGYSEMLELPDRALGLSCTALPQQGNLTVHPGHLHAQTNSFHSTEKAQEKLVFPRPCKLEEISAEHSIQPPHDDLQALQQQLDVHREAIRSCQDIQEELLLQRLNKLEQRVSSKQISSSPLLSQVALPIANSEGTLQSSPAKNDDTEMLRSHSEYLNFSQPLQDNVTEQLDLEVVFHKELLLHKQKSQTKSESPEHAAPFNDAVIPRLQDRLLSYFQPALTQQDSMSPQKQLNLQREALYSRQKAQEELLVQRQTALQQQVQKHRETLKGFSNVSQTRAASGENDLEMQKTEQLTGWFPHIQGWPWGDSSQGSSSGDQPGAAAVHAEHSGESLGKELSGRASKPPVSKVKCVFDLNQHELSTIQEVESPTSGRTSMPGKAEFYRDRDPLRVSVSREQSYLGSPVAHDPFGCHQPSVQENSKSHDTAKAVKVKKSDIEDHALLSHAISEEEEEEEACTNLSPLMKPDDEVETQEISQELLSSMTVSTGSFLSYEITDLSLTDPESFSEQTEHQEQESSSKEEETGSLSCAVPSTQVTYQQQHSLGAHNSLLPTEEENASDQTHVHQIIDKDINEANLIPDKRDFQVPAVDLDFPELEHLFPHLHRQLFKPLEPHLDLDLSSPGTSQEDRDFYQQNSESSSEKHVKALSTSTLCFTALTAGSHSPNSRLNQQLDVNLAHATTEGSEQSFQQLLPEFSSQESQHTDLPSIYSIEARGTSQSMENQNYSEILQNKKKSIYFQPSTENLSPACSSSDTTLFDQLHPQHSTPCGSVSSEGSVKQLEGREEMLGFEELSRRAVPMSQRLTEDENVVLPINPYVGTVEMETSIQGSNSLSIQNEKPIQNVIKTETTKAVRNVCQLAQEEHMLKSESCPFRRPIPVWETETGYGIMEEPDLTLLSTSDISITDTDLANLTIEDNEAQCSQAGAVQPSSSVETTFCGAASEPWADQPTVASSAIPGSLGEAFMKRKKTFMERSYQRQREIWNKTPLPQAKVSKEKLSTSSSLSHLKEAVSGDETAKRNRSQCI.

Positions 1–540 (MKRKVMNGKL…KQADHLEVRP (540 aa)) are necessary for centriole targeting and microtubule association. Serine 13 bears the Phosphoserine mark. Coiled coils occupy residues 53–84 (QRRN…LEKL), 114–148 (AERK…HIKA), 209–277 (DAHL…KRQT), 488–538 (ARHK…HLEV), and 567–592 (QQNR…VLKE). Disordered stretches follow at residues 602 to 643 (LIPD…PVQP), 660 to 681 (GHIP…SQER), and 735 to 764 (SDSQ…LMPE). Serine 634 is modified (phosphoserine). Low complexity predominate over residues 735-750 (SDSQQISSEDSENISS). Residues 817-848 (GQLELQKKVLQERQEAQEKLLSCTQKELEEQT) adopt a coiled-coil conformation. 3 disordered regions span residues 864-893 (SLPS…SMDN), 966-986 (ADTQ…KGLL), and 1212-1272 (VDPE…SKVT). Over residues 1219–1250 (FQFSPQTQENRSSQQTGFSSFTPSLRQPSCVS) the composition is skewed to polar residues. Residues 1444–1488 (HDDLQALQQQLDVHREAIRSCQDIQEELLLQRLNKLEQRVSSKQI) adopt a coiled-coil conformation. At serine 1565 the chain carries Phosphoserine. A compositionally biased stretch (low complexity) spans 1677–1692 (PWGDSSQGSSSGDQPG). Disordered stretches follow at residues 1677–1715 (PWGD…RASK), 1819–1845 (SEEE…ETQE), 1875–1899 (ESFS…GSLS), 1989–2013 (DLSS…SSEK), and 2354–2395 (NKTP…SQCI). Basic and acidic residues predominate over residues 1697–1710 (HAEHSGESLGKELS). Over residues 1880–1894 (QTEHQEQESSSKEEE) the composition is skewed to basic and acidic residues. Positions 2329–2395 (SLGEAFMKRK…TAKRNRSQCI (67 aa)) are ALMS motif. Over residues 2376-2388 (HLKEAVSGDETAK) the composition is skewed to basic and acidic residues.

In terms of assembly, interacts (via ALMS motif) with microtubules; this interaction is direct.

The protein localises to the cytoplasm. The protein resides in the cytoskeleton. Its subcellular location is the microtubule organizing center. It localises to the centrosome. It is found in the centriole. The protein localises to the spindle. Functionally, centriole-enriched microtubule-binding protein involved in centriole biogenesis. Essential for the generation of the distal portion of new-born centrioles in a CPAP- and CEP120-mediated elongation dependent manner during the cell cycle S/G2 phase after formation of the initiating cartwheel structure. Required for the recruitment of centriolar proteins, such as POC1B, POC5 and CEP135, into the distal portion of centrioles. Also required for centriole-to-centrosome conversion during mitotic progression, but is dispensable for cartwheel removal or centriole disengagement. Binds to and stabilizes centriolar microtubule. May be involved in ciliogenesis. This chain is Centrosomal protein of 295 kDa, found in Rattus norvegicus (Rat).